The primary structure comprises 418 residues: Glutamyl-tRNA reductase (418 aa).

Substrate-binding positions include 49 to 52, Ser-108, 113 to 115, and Gln-119; these read TCNR and EPQ. Cys-50 acts as the Nucleophile in catalysis. 188–193 provides a ligand contact to NADP(+); it reads GAGETI.

Belongs to the glutamyl-tRNA reductase family. In terms of assembly, homodimer.

It carries out the reaction (S)-4-amino-5-oxopentanoate + tRNA(Glu) + NADP(+) = L-glutamyl-tRNA(Glu) + NADPH + H(+). The protein operates within porphyrin-containing compound metabolism; protoporphyrin-IX biosynthesis; 5-aminolevulinate from L-glutamyl-tRNA(Glu): step 1/2. In terms of biological role, catalyzes the NADPH-dependent reduction of glutamyl-tRNA(Glu) to glutamate 1-semialdehyde (GSA). The protein is Glutamyl-tRNA reductase of Aliivibrio fischeri (strain MJ11) (Vibrio fischeri).